We begin with the raw amino-acid sequence, 237 residues long: Large ribosomal subunit protein uL1 (237 aa).

Belongs to the universal ribosomal protein uL1 family. Part of the 50S ribosomal subunit.

Binds directly to 23S rRNA. The L1 stalk is quite mobile in the ribosome, and is involved in E site tRNA release. Functionally, protein L1 is also a translational repressor protein, it controls the translation of the L11 operon by binding to its mRNA. This chain is Large ribosomal subunit protein uL1, found in Chloroflexus aurantiacus (strain ATCC 29364 / DSM 637 / Y-400-fl).